Here is a 331-residue protein sequence, read N- to C-terminus: Protein PER1 homolog (331 aa).

Positions Met1–Ala24 are cleaved as a signal peptide. The Lumenal segment spans residues Ser25 to Arg100. A helical transmembrane segment spans residues Val101–Tyr121. The Cytoplasmic segment spans residues Asn122–Arg139. The chain crosses the membrane as a helical span at residues Leu140 to Ile160. The Lumenal portion of the chain corresponds to Arg161–Lys168. The chain crosses the membrane as a helical span at residues Leu169 to Met189. At Leu190 to Lys199 the chain is on the cytoplasmic side. A helical transmembrane segment spans residues Leu200–Leu220. The Lumenal portion of the chain corresponds to Ser221–Lys232. The helical transmembrane segment at Ala233–Trp250 threads the bilayer. At Ser251–Pro263 the chain is on the cytoplasmic side. A helical membrane pass occupies residues Ala264–Ile284. Topologically, residues Ala285 to Asp289 are lumenal. Residues Ala290–Val310 form a helical membrane-spanning segment. At Arg311–Arg331 the chain is on the cytoplasmic side.

This sequence belongs to the PGAP3/PER1 family.

The protein localises to the endoplasmic reticulum membrane. The protein resides in the vacuole membrane. Functionally, involved in the lipid remodeling steps of GPI-anchor maturation. Lipid remodeling steps consist in the generation of 2 saturated fatty chains at the sn-2 position of GPI-anchors proteins. Required for phospholipase A2 activity that removes an acyl-chain at the sn-2 position of GPI-anchors during the remodeling of GPI. Required for efficient transport of GPI-anchor proteins. The protein is Protein PER1 homolog of Schizosaccharomyces pombe (strain 972 / ATCC 24843) (Fission yeast).